Here is a 145-residue protein sequence, read N- to C-terminus: Flagellar assembly factor FliW (145 aa).

The protein belongs to the FliW family. As to quaternary structure, interacts with translational regulator CsrA and flagellin(s).

It localises to the cytoplasm. Acts as an anti-CsrA protein, binds CsrA and prevents it from repressing translation of its target genes, one of which is flagellin. Binds to flagellin and participates in the assembly of the flagellum. This Clostridium kluyveri (strain NBRC 12016) protein is Flagellar assembly factor FliW.